Consider the following 478-residue polypeptide: Endoglucanase 18 (478 aa).

Positions 1–21 are cleaved as a signal peptide; sequence MGKLLVVMLIGMFLAFESLEA. An N-linked (GlcNAc...) asparagine glycan is attached at asparagine 29. The active-site Nucleophile is aspartate 76. The active site involves histidine 398. The interval 433-452 is disordered; the sequence is HTGAIVGGPNSSDQYSDKRT. Asparagine 442 carries an N-linked (GlcNAc...) asparagine glycan. Residues aspartate 449 and glutamate 458 contribute to the active site.

This sequence belongs to the glycosyl hydrolase 9 (cellulase E) family.

The protein resides in the secreted. The catalysed reaction is Endohydrolysis of (1-&gt;4)-beta-D-glucosidic linkages in cellulose, lichenin and cereal beta-D-glucans.. This is Endoglucanase 18 from Arabidopsis thaliana (Mouse-ear cress).